The following is a 324-amino-acid chain: Phospho-N-acetylmuramoyl-pentapeptide-transferase (324 aa).

Transmembrane regions (helical) follow at residues 9–29 (TFAV…PFLV), 54–74 (MGAV…SFIG), 77–97 (VSAA…LGFL), 117–137 (FLGQ…SDFA), 147–167 (IEVD…VGFS), 176–196 (LDGL…VIAF), 201–221 (MDVA…LLFN), 227–247 (IFMG…VSIL), 253–273 (LLLL…LQVF), and 304–324 (VLTF…VVIF).

It belongs to the glycosyltransferase 4 family. MraY subfamily. The cofactor is Mg(2+).

It is found in the cell membrane. The catalysed reaction is UDP-N-acetyl-alpha-D-muramoyl-L-alanyl-gamma-D-glutamyl-meso-2,6-diaminopimeloyl-D-alanyl-D-alanine + di-trans,octa-cis-undecaprenyl phosphate = di-trans,octa-cis-undecaprenyl diphospho-N-acetyl-alpha-D-muramoyl-L-alanyl-D-glutamyl-meso-2,6-diaminopimeloyl-D-alanyl-D-alanine + UMP. Its pathway is cell wall biogenesis; peptidoglycan biosynthesis. In terms of biological role, catalyzes the initial step of the lipid cycle reactions in the biosynthesis of the cell wall peptidoglycan: transfers peptidoglycan precursor phospho-MurNAc-pentapeptide from UDP-MurNAc-pentapeptide onto the lipid carrier undecaprenyl phosphate, yielding undecaprenyl-pyrophosphoryl-MurNAc-pentapeptide, known as lipid I. This Listeria welshimeri serovar 6b (strain ATCC 35897 / DSM 20650 / CCUG 15529 / CIP 8149 / NCTC 11857 / SLCC 5334 / V8) protein is Phospho-N-acetylmuramoyl-pentapeptide-transferase.